The sequence spans 360 residues: Phospho-N-acetylmuramoyl-pentapeptide-transferase (360 aa).

The next 10 helical transmembrane spans lie at 27-47, 70-90, 98-118, 134-154, 168-188, 199-219, 239-259, 263-283, 288-308, and 337-357; these read GALF…ISLL, GTPT…ILLW, VWVT…DDYL, LLLE…YSPA, ALLN…VGAG, GLAI…AYLV, LAVV…FNAP, IFMG…IAVA, IVLA…IIQV, and QVVI…LATL.

This sequence belongs to the glycosyltransferase 4 family. MraY subfamily. Mg(2+) is required as a cofactor.

The protein resides in the cell inner membrane. It carries out the reaction UDP-N-acetyl-alpha-D-muramoyl-L-alanyl-gamma-D-glutamyl-meso-2,6-diaminopimeloyl-D-alanyl-D-alanine + di-trans,octa-cis-undecaprenyl phosphate = di-trans,octa-cis-undecaprenyl diphospho-N-acetyl-alpha-D-muramoyl-L-alanyl-D-glutamyl-meso-2,6-diaminopimeloyl-D-alanyl-D-alanine + UMP. It participates in cell wall biogenesis; peptidoglycan biosynthesis. Catalyzes the initial step of the lipid cycle reactions in the biosynthesis of the cell wall peptidoglycan: transfers peptidoglycan precursor phospho-MurNAc-pentapeptide from UDP-MurNAc-pentapeptide onto the lipid carrier undecaprenyl phosphate, yielding undecaprenyl-pyrophosphoryl-MurNAc-pentapeptide, known as lipid I. This is Phospho-N-acetylmuramoyl-pentapeptide-transferase from Methylorubrum populi (strain ATCC BAA-705 / NCIMB 13946 / BJ001) (Methylobacterium populi).